We begin with the raw amino-acid sequence, 397 residues long: UDP-GlcNAc:betaGal beta-1,3-N-acetylglucosaminyltransferase 7 (397 aa).

Topologically, residues 1 to 6 (MSLWKK) are cytoplasmic. A helical membrane pass occupies residues 7–26 (TLYKSVCLALALLVAVTVFQ). At 27-397 (RSVTPGQFLQ…LTCSVKFQVL (371 aa)) the chain is on the lumenal side. N-linked (GlcNAc...) asparagine glycans are attached at residues N84, N90, N210, and N387.

This sequence belongs to the glycosyltransferase 31 family. Strongly expressed in placenta and colon. Moderately expressed in lung, stomach, small intestine and kidney. Very weakly expressed in cerebrum, cerebellum, heart and testis.

The protein resides in the golgi apparatus membrane. The protein operates within protein modification; protein glycosylation. Functionally, N-acetyl glucosamine (GlcNAc) transferase that catalyzes the transfer of GlcNAc via a beta1-&gt;3 linkage from UDP-GlcNAc to the non-reducing terminal galactose (Gal) in the linearly growing chain of N- and O-linked keratan sulfate proteoglycans. Cooperates with B4GALT4 galactosyltransferase and CHST6 and CHST1 sulfotransferases to construct and elongate mono- and disulfated disaccharide units [-&gt;3Galbeta1-&gt;4(6-sulfoGlcNAcbeta)1-&gt;] and [-&gt;3(6-sulfoGalbeta)1-&gt;4(6-sulfoGlcNAcbeta)1-&gt;] within keratan sulfate polymer. Involved in biosynthesis of N-linked keratan sulfate proteoglycans in cornea, with an impact on proteoglycan fibril organization and corneal transparency. May play a role in the maintenance of tissue architecture by suppressing cellular motility and invasion. The polypeptide is UDP-GlcNAc:betaGal beta-1,3-N-acetylglucosaminyltransferase 7 (B3gnt7) (Mus musculus (Mouse)).